We begin with the raw amino-acid sequence, 464 residues long: Non-neuronal cytoplasmic intermediate filament protein (464 aa).

The segment covering methionine 1 to threonine 14 has biased composition (polar residues). The disordered stretch occupies residues methionine 1 to serine 59. The segment at methionine 1 to glutamate 101 is head. A compositionally biased stretch (gly residues) spans serine 17 to arginine 27. Residues alanine 45 to serine 59 are compositionally biased toward low complexity. The 316-residue stretch at glutamate 98–leucine 413 folds into the IF rod domain. The segment at leucine 102 to glutamine 133 is coil 1A. The interval glutamate 134–leucine 144 is linker 1. The segment at tyrosine 145–isoleucine 237 is coil 1B. Positions arginine 238 to glycine 264 are linker 2. The segment at proline 265–leucine 413 is coil 2. Positions phenylalanine 414–lysine 464 are tail. The interval glycine 415–lysine 464 is disordered. The span at glycine 420–serine 438 shows a compositional bias: low complexity. The segment covering glycine 439–serine 448 has biased composition (gly residues). The span at serine 449–lysine 464 shows a compositional bias: low complexity.

This sequence belongs to the intermediate filament family. As to quaternary structure, can form homopolymers.

Its subcellular location is the cytoplasm. This chain is Non-neuronal cytoplasmic intermediate filament protein, found in Branchiostoma lanceolatum (Common lancelet).